Reading from the N-terminus, the 407-residue chain is Serine/threonine transporter SstT (407 aa).

9 consecutive transmembrane segments (helical) span residues 12 to 32 (GNLIVQICIGIVLGILIGISS), 42 to 62 (LGILFTSALKAIAPMLVFILI), 81 to 101 (IIILYIVGTFLASACAVLANF), 141 to 161 (ALSSGNYLGILTWAIAGGIAL), 179 to 199 (VLKIVKFIVKLAPFGIFGLVA), 218 to 238 (ILLVTTMLFVTFVINALIVFF), 245 to 267 (FPLIFICLRHSAFFAFFTRSSAA), 288 to 308 (ISIPLGATINMAGAAVTIAIL), and 330 to 350 (IIATFAACGASGVAGGSLLLI).

The protein belongs to the dicarboxylate/amino acid:cation symporter (DAACS) (TC 2.A.23) family.

The protein resides in the cell inner membrane. It carries out the reaction L-serine(in) + Na(+)(in) = L-serine(out) + Na(+)(out). The catalysed reaction is L-threonine(in) + Na(+)(in) = L-threonine(out) + Na(+)(out). Its function is as follows. Involved in the import of serine and threonine into the cell, with the concomitant import of sodium (symport system). The chain is Serine/threonine transporter SstT from Campylobacter jejuni subsp. jejuni serotype O:6 (strain 81116 / NCTC 11828).